The following is a 469-amino-acid chain: UDP-N-acetylmuramate--L-alanine ligase (469 aa).

G118–T124 contributes to the ATP binding site.

This sequence belongs to the MurCDEF family.

It is found in the cytoplasm. It carries out the reaction UDP-N-acetyl-alpha-D-muramate + L-alanine + ATP = UDP-N-acetyl-alpha-D-muramoyl-L-alanine + ADP + phosphate + H(+). It participates in cell wall biogenesis; peptidoglycan biosynthesis. Functionally, cell wall formation. This is UDP-N-acetylmuramate--L-alanine ligase from Ruegeria sp. (strain TM1040) (Silicibacter sp.).